The sequence spans 213 residues: Protein GrpE (213 aa).

Positions 1–23 are enriched in basic and acidic residues; that stretch reads MSDEKKPEAETSESLQKREEKLA. The disordered stretch occupies residues 1–43; that stretch reads MSDEKKPEAETSESLQKREEKLAETLASEPAAQGEAEDAAAAG. A compositionally biased stretch (low complexity) spans 29–43; it reads EPAAQGEAEDAAAAG.

This sequence belongs to the GrpE family. Homodimer.

It is found in the cytoplasm. Its function is as follows. Participates actively in the response to hyperosmotic and heat shock by preventing the aggregation of stress-denatured proteins, in association with DnaK and GrpE. It is the nucleotide exchange factor for DnaK and may function as a thermosensor. Unfolded proteins bind initially to DnaJ; upon interaction with the DnaJ-bound protein, DnaK hydrolyzes its bound ATP, resulting in the formation of a stable complex. GrpE releases ADP from DnaK; ATP binding to DnaK triggers the release of the substrate protein, thus completing the reaction cycle. Several rounds of ATP-dependent interactions between DnaJ, DnaK and GrpE are required for fully efficient folding. The chain is Protein GrpE from Parvibaculum lavamentivorans (strain DS-1 / DSM 13023 / NCIMB 13966).